Here is a 601-residue protein sequence, read N- to C-terminus: Phosphomethylpyrimidine synthase (601 aa).

Residues Asn224, Met253, Tyr282, His318, 338-340 (SRG), 379-382 (DGLR), and Glu418 each bind substrate. His422 is a Zn(2+) binding site. Tyr445 provides a ligand contact to substrate. A Zn(2+)-binding site is contributed by His486. The [4Fe-4S] cluster site is built by Cys566, Cys569, and Cys574.

Belongs to the ThiC family. In terms of assembly, homodimer. [4Fe-4S] cluster is required as a cofactor.

The catalysed reaction is 5-amino-1-(5-phospho-beta-D-ribosyl)imidazole + S-adenosyl-L-methionine = 4-amino-2-methyl-5-(phosphooxymethyl)pyrimidine + CO + 5'-deoxyadenosine + formate + L-methionine + 3 H(+). Its pathway is cofactor biosynthesis; thiamine diphosphate biosynthesis. Its function is as follows. Catalyzes the synthesis of the hydroxymethylpyrimidine phosphate (HMP-P) moiety of thiamine from aminoimidazole ribotide (AIR) in a radical S-adenosyl-L-methionine (SAM)-dependent reaction. This is Phosphomethylpyrimidine synthase from Xylella fastidiosa (strain 9a5c).